The chain runs to 456 residues: Maturase-like protein 1 (456 aa).

This sequence to group II intron maturases.

The protein localises to the plastid. Functionally, could be required for group III intron excision. The protein is Maturase-like protein 1 (mat1) of Euglena longa (Euglenophycean alga).